We begin with the raw amino-acid sequence, 119 residues long: Autophagy-related protein 8h (119 aa).

A lipid anchor (Phosphatidylethanolamine amidated glycine) is attached at glycine 119.

This sequence belongs to the ATG8 family. In terms of assembly, interacts with ATG4. Interacts with ATI1. Post-translationally, gly-119 forms then a thioester bond with the 'Cys-558' of ATG7 (E1-like activating enzyme) before being transferred to the 'Cys-258' of ATG3 (the specific E2 conjugating enzyme), in order to be finally amidated with phosphatidylethanolamine. This lipid modification anchors ATG8 to autophagosomes. In terms of tissue distribution, constitutively expressed.

The protein localises to the cytoplasmic vesicle. The protein resides in the autophagosome membrane. Its subcellular location is the vacuole membrane. It is found in the cytoplasm. It localises to the cytoskeleton. Functionally, ubiquitin-like modifier involved in autophagosomes formation. May mediate the delivery of the autophagosomes to the vacuole via the microtubule cytoskeleton. The protein is Autophagy-related protein 8h (ATG8H) of Arabidopsis thaliana (Mouse-ear cress).